The sequence spans 131 residues: Beta/delta-urticatoxin-Dm2a (131 aa).

Residues 1-24 form the signal peptide; it reads MKSSATVVLLVAAVTAAMVMSSSA. Residues 25 to 69 constitute a propeptide that is removed on maturation; sequence SGDAVMIDEHNNIMTSVEGKRGIGSSVVANGGNRKMANVLLSGWE. Intrachain disulfides connect C72–C88, C79–C93, C87–C101, C103–C117, C110–C122, and C116–C130.

It belongs to the urticatoxin-2 family. As to expression, expressed in trichomes, that are stiff epidermal hairs located on the surface of petioles and leaves.

Its subcellular location is the secreted. Plant defense neurotoxin that causes pain and systemic symptoms in mammals via modulation of voltage-gated sodium channels (Nav). Potent modulator of human Nav1.5/SCN5A (EC(50)=55 nM), Nav1.6/SCN8A (EC(50)=0.86 nM), and Nav1.7/SCN9A (EC(50)=208 nM), where it shifts the activation threshold to more negative potentials and delays fast inactivation. Also shifts the voltage-dependence of steady-state fast inactivation of Nav1.6/SCN8A, but not that of Nav1.5/SCN5A or Nav1.7/SCN9A. On Nav1.7/SCN9A, principally acts by binding to extracellular loops of domain IV (Nav site 3). In vivo, intraplantar injection into mice causes numerous dose-dependent, immediate, and long-lasting spontaneous pain behaviors, while no swelling is observed in the injected paw. At the highest doses tested, systemic symptoms including hypokinesia and hypersalivation are observed. The polypeptide is Beta/delta-urticatoxin-Dm2a (Dendrocnide moroides (Gympie stinging tree)).